A 249-amino-acid polypeptide reads, in one-letter code: Probable transcriptional regulatory protein Psyc_0938 (249 aa).

The protein belongs to the TACO1 family.

The protein resides in the cytoplasm. The chain is Probable transcriptional regulatory protein Psyc_0938 from Psychrobacter arcticus (strain DSM 17307 / VKM B-2377 / 273-4).